Here is a 456-residue protein sequence, read N- to C-terminus: Na(+)-translocating NADH-quinone reductase subunit A (456 aa).

It belongs to the NqrA family. In terms of assembly, composed of six subunits; NqrA, NqrB, NqrC, NqrD, NqrE and NqrF.

It carries out the reaction a ubiquinone + n Na(+)(in) + NADH + H(+) = a ubiquinol + n Na(+)(out) + NAD(+). NQR complex catalyzes the reduction of ubiquinone-1 to ubiquinol by two successive reactions, coupled with the transport of Na(+) ions from the cytoplasm to the periplasm. NqrA to NqrE are probably involved in the second step, the conversion of ubisemiquinone to ubiquinol. This Rhodopirellula baltica (strain DSM 10527 / NCIMB 13988 / SH1) protein is Na(+)-translocating NADH-quinone reductase subunit A.